The primary structure comprises 513 residues: Cytochrome P450 monooxygenase asaD (513 aa).

The helical transmembrane segment at 14–34 (ILYPFLFGIFAVASLCIATLL) threads the bilayer. N-linked (GlcNAc...) asparagine glycans are attached at residues Asn258, Asn370, Asn431, and Asn441. Cys461 contributes to the heme binding site.

It belongs to the cytochrome P450 family. Requires heme as cofactor.

Its subcellular location is the membrane. Its pathway is secondary metabolite biosynthesis. Its function is as follows. Cytochrome P450 monooxygenase; part of the gene cluster that mediates the biosynthesis of aspergillic acid, a hydroxamic acid-containing pyrazinone with aliphatic side chains that originates from leucine (Leu) and isoleucine (Ile). Aspergillic acid has antibiotic properties and was shown to be lethal to mice. The first step in the pathway is the production of deoxyaspergillic acid via a condensation between the Ile amine and the Leu carboxylic acid, followed by a reductive release from the protein forming the dipeptide aldehyde NH(2)-Leu-Ile-CHO, which could undergo an intermolecular cyclization resulting in a dihydropyrazinone. As the NRPS asaC lacks a condensation domain, it is improbable that it is responsible for condensation of Leu and Ile. One possibility is that asaC acts on a previously condensed dipeptide and functions as a Leu-Ile reductase to yield deoxyaspergillic acid. After asaC forms deoxyaspergillic acid, the cytochrome P450 asaD oxidizes the pyrazinone to the hydroxamic acid-containing bioactive metabolite aspergillic acid. The hydroxylase/desaturase asaB can then convert aspergillic acid to hydroxyaspergillic acid. Both aspergillic acid and hydroxyaspergillic acid can form complexes with iron producing ferriaspergillin analogs. The polypeptide is Cytochrome P450 monooxygenase asaD (Aspergillus flavus (strain ATCC 200026 / FGSC A1120 / IAM 13836 / NRRL 3357 / JCM 12722 / SRRC 167)).